The following is a 406-amino-acid chain: 3-oxoacyl-[acyl-carrier-protein] synthase 1 (406 aa).

The 403-residue stretch at 1–403 (MKRAVITGLG…GTNATLVMRK (403 aa)) folds into the Ketosynthase family 3 (KS3) domain. Residues Cys163, His298, and His333 each act as for beta-ketoacyl synthase activity in the active site.

Belongs to the thiolase-like superfamily. Beta-ketoacyl-ACP synthases family. Homodimer.

It is found in the cytoplasm. It carries out the reaction a fatty acyl-[ACP] + malonyl-[ACP] + H(+) = a 3-oxoacyl-[ACP] + holo-[ACP] + CO2. The catalysed reaction is (3Z)-decenoyl-[ACP] + malonyl-[ACP] + H(+) = 3-oxo-(5Z)-dodecenoyl-[ACP] + holo-[ACP] + CO2. It functions in the pathway lipid metabolism; fatty acid biosynthesis. Involved in the type II fatty acid elongation cycle. Catalyzes the elongation of a wide range of acyl-ACP by the addition of two carbons from malonyl-ACP to an acyl acceptor. Can also use unsaturated fatty acids. Catalyzes a key reaction in unsaturated fatty acid (UFA) synthesis, the elongation of the cis-3-decenoyl-ACP produced by FabA. This is 3-oxoacyl-[acyl-carrier-protein] synthase 1 (fabB) from Escherichia coli O6:H1 (strain CFT073 / ATCC 700928 / UPEC).